The primary structure comprises 155 residues: MSKSDLNLLVENIKFEHLNVFYDFVVSVLNALSISDFELSVILCDNAYIQELNNKFRNKNEPTDVLSFNYNEHNELNEDLVDGINYKIQGDLVISFEYLKFSAQEFNVEIYEELQRVTIHGILHLMGYKHETNDFQKEGMLILQENILKENKRVF.

The Zn(2+) site is built by H120, H124, and H130.

It belongs to the endoribonuclease YbeY family. Zn(2+) serves as cofactor.

The protein localises to the cytoplasm. In terms of biological role, single strand-specific metallo-endoribonuclease involved in late-stage 70S ribosome quality control and in maturation of the 3' terminus of the 16S rRNA. The chain is Endoribonuclease YbeY from Borreliella burgdorferi (strain ATCC 35210 / DSM 4680 / CIP 102532 / B31) (Borrelia burgdorferi).